The chain runs to 150 residues: Regulatory protein RecX (150 aa).

The protein belongs to the RecX family.

It is found in the cytoplasm. In terms of biological role, modulates RecA activity. The chain is Regulatory protein RecX from Acidithiobacillus ferrooxidans (strain ATCC 23270 / DSM 14882 / CIP 104768 / NCIMB 8455) (Ferrobacillus ferrooxidans (strain ATCC 23270)).